The chain runs to 436 residues: GTPase Der (436 aa).

2 EngA-type G domains span residues 4–167 (PIVA…PDEA) and 175–351 (IRFS…DNHR). GTP-binding positions include 10 to 17 (GRPNVGKS), 57 to 61 (DTGGI), 119 to 122 (NKVD), 181 to 188 (GRPNVGKS), 229 to 233 (DTAGM), and 294 to 297 (NKWD). Positions 352–436 (KRITSSTLND…PIKLIVRARK (85 aa)) constitute a KH-like domain.

This sequence belongs to the TRAFAC class TrmE-Era-EngA-EngB-Septin-like GTPase superfamily. EngA (Der) GTPase family. In terms of assembly, associates with the 50S ribosomal subunit.

GTPase that plays an essential role in the late steps of ribosome biogenesis. This is GTPase Der from Leuconostoc mesenteroides subsp. mesenteroides (strain ATCC 8293 / DSM 20343 / BCRC 11652 / CCM 1803 / JCM 6124 / NCDO 523 / NBRC 100496 / NCIMB 8023 / NCTC 12954 / NRRL B-1118 / 37Y).